A 269-amino-acid polypeptide reads, in one-letter code: Protein shisa-1 (269 aa).

The first 18 residues, 1–18, serve as a signal peptide directing secretion; it reads MEFIVLLTVCALLGLSCG. The Extracellular portion of the chain corresponds to 19 to 98; that stretch reads QHGEYCHGWT…LPPTVPTYFP (80 aa). A helical transmembrane segment spans residues 99 to 119; sequence FLLVGSIFVSFVILGSLVGLC. The Cytoplasmic segment spans residues 120-269; sequence CCKCLKPEDD…TVCSGSPSKC (150 aa). The segment at 129 to 167 is disordered; the sequence is DTQVSGPAPIQSRLLDQDPSTDTSRHSSSSSASMPRPPI. Residues 146 to 162 show a composition bias toward low complexity; that stretch reads DPSTDTSRHSSSSSASM.

It belongs to the shisa family. Interacts with immature forms of fzd8 and fgfr.

The protein localises to the endoplasmic reticulum. Its subcellular location is the membrane. In terms of biological role, required for head formation during gastrulation. Functions as an inhibitor for the caudalizing signals wnt and fgf, does not inhibit bmp, activin and nodal signaling in head formation process. Induces retention of fzd8 in the endoplasmic reticulum and inhibits trafficking of fzd8 to the cell surface. The sequence is that of Protein shisa-1 (shisa1) from Xenopus laevis (African clawed frog).